The sequence spans 87 residues: MSEINKAEIVASNARAPSDTGSPEVQVALLTARINHLMPHFKTHMKDHHGRRGLLRMVSRRRKLLDYLKSRDADRYTSLIQKLGLRK.

Residues Met1–Ser22 form a disordered region.

The protein belongs to the universal ribosomal protein uS15 family. Part of the 30S ribosomal subunit. Forms a bridge to the 50S subunit in the 70S ribosome, contacting the 23S rRNA.

Functionally, one of the primary rRNA binding proteins, it binds directly to 16S rRNA where it helps nucleate assembly of the platform of the 30S subunit by binding and bridging several RNA helices of the 16S rRNA. In terms of biological role, forms an intersubunit bridge (bridge B4) with the 23S rRNA of the 50S subunit in the ribosome. The protein is Small ribosomal subunit protein uS15 of Leptothrix cholodnii (strain ATCC 51168 / LMG 8142 / SP-6) (Leptothrix discophora (strain SP-6)).